Consider the following 497-residue polypeptide: Early growth response protein 1-A (497 aa).

Positions 139 to 165 are enriched in low complexity; sequence SPSSAPSSSPSSSSSSSSSQSPPLSCS. Disordered stretches follow at residues 139 to 169, 175 to 194, and 286 to 309; these read SPSS…VQSN, YSAA…DHSP, and PSRM…YGCP. 3 C2H2-type zinc fingers span residues 306–330, 336–358, and 364–386; these read YGCP…IRIH, FQCR…IRTH, and FACD…TKIH. Residues 377 to 441 form a disordered region; the sequence is DERKRHTKIH…SYPSPVHSSF (65 aa). The span at 381–391 shows a compositional bias: basic residues; sequence RHTKIHLRQKD. Low complexity predominate over residues 397 to 441; it reads ATPVSVASPVSSYSPSASTSYPSPVPTSYSSPVSSSYPSPVHSSF.

It belongs to the EGR C2H2-type zinc-finger protein family. Expressed in the presumptive mesoderm. In blastula embryos, expressed in the dorsal marginal zone, and at the onset of gastrulation expression is specific to the Spemann organizer. As gastrulation proceeds, expressed in a ring around the yolk plug. This expression is maintained in advanced gastrulae, with weak expression also extending into the dorsal midline. By the neurula stage, expression is excluded from the notochord. In late tailbud stages, expressed in two spots in the anterior forebrain, which are connected via a bridge of cells that also show expression.

It localises to the nucleus. Its subcellular location is the cytoplasm. In terms of biological role, transcriptional regulator. Recognizes and binds to the DNA sequence 5'-GCG(T/G)GGGCG-3'(EGR-site) in the promoter region of target genes. Binds double-stranded target DNA, irrespective of the cytosine methylation status. Regulates the transcription of numerous target genes, and thereby plays an important role in regulating the response to growth factors, DNA damage, and ischemia. Plays a role in the regulation of cell survival, proliferation and cell death. Mediates responses to ischemia and hypoxia; regulates the expression of proteins that are involved in inflammatory processes. Plays a role in regulating the expression of circadian clock genes. This chain is Early growth response protein 1-A (egr1-a), found in Xenopus laevis (African clawed frog).